Here is a 203-residue protein sequence, read N- to C-terminus: bMERB domain-containing protein 1 (203 aa).

The bMERB domain occupies 3–149 (LKQSLSVHLE…EQEEDKEMAD (147 aa)). The disordered stretch occupies residues 160-186 (KVTKSSASSRAEKKAEPPPSKPTVAKT).

This Rattus norvegicus (Rat) protein is bMERB domain-containing protein 1 (Bmerb1).